Consider the following 287-residue polypeptide: Shikimate dehydrogenase (NADP(+)) (287 aa).

Residues 20–22 (SRS) and T67 contribute to the shikimate site. Catalysis depends on K71, which acts as the Proton acceptor. E84 serves as a coordination point for NADP(+). Residues N93 and D108 each contribute to the shikimate site. NADP(+) contacts are provided by residues 132-136 (GAGGA), 156-161 (NRTAAR), and M226. Residue Y228 coordinates shikimate. G250 lines the NADP(+) pocket.

Belongs to the shikimate dehydrogenase family. As to quaternary structure, homodimer.

The enzyme catalyses shikimate + NADP(+) = 3-dehydroshikimate + NADPH + H(+). It participates in metabolic intermediate biosynthesis; chorismate biosynthesis; chorismate from D-erythrose 4-phosphate and phosphoenolpyruvate: step 4/7. Functionally, involved in the biosynthesis of the chorismate, which leads to the biosynthesis of aromatic amino acids. Catalyzes the reversible NADPH linked reduction of 3-dehydroshikimate (DHSA) to yield shikimate (SA). The sequence is that of Shikimate dehydrogenase (NADP(+)) from Bordetella pertussis (strain Tohama I / ATCC BAA-589 / NCTC 13251).